Here is a 235-residue protein sequence, read N- to C-terminus: MPKHGKKYRSAIEGRDIAEILTLEDAVAKSLGASFAKFDETVDVAICLGVDPKYSDQMVRGAVTLPHGLGKTVRVAVFCKGDKEAEAKAAGADFAGAEELVAKIKEGWLDFDKAIATPDVMALVGQIGRVLGPRGLMPNAKTGTVTFDVATAVKETKAGRVEFKVDKAGVLHAPLGKVSFGPEKILDNLKSLLDTVNRLKPATAKGTYMKAMAVSTTMGPGFKVDPTTIKKFLEG.

The protein belongs to the universal ribosomal protein uL1 family. In terms of assembly, part of the 50S ribosomal subunit.

Functionally, binds directly to 23S rRNA. The L1 stalk is quite mobile in the ribosome, and is involved in E site tRNA release. In terms of biological role, protein L1 is also a translational repressor protein, it controls the translation of the L11 operon by binding to its mRNA. This Nitratidesulfovibrio vulgaris (strain DSM 19637 / Miyazaki F) (Desulfovibrio vulgaris) protein is Large ribosomal subunit protein uL1.